The following is a 446-amino-acid chain: F-box/LRR-repeat protein At4g29420 (446 aa).

The F-box domain maps to 1-51 (MDELPPELWIKILSRINDSESLARCRVASKTLNSLSREVRAVNLICTWSRY). LRR repeat units lie at residues 59–84 (VVTP…SVGV), 103–130 (DLYL…SISD), 135–160 (SCWR…EVKN), 181–206 (FIRL…NLIG), 223–248 (CHWT…KLKC), 265–289 (HLSV…ELVS), 318–343 (QSER…SLSP), and 382–407 (NVHQ…RLMI).

The chain is F-box/LRR-repeat protein At4g29420 from Arabidopsis thaliana (Mouse-ear cress).